Reading from the N-terminus, the 316-residue chain is Tyrosine--tRNA ligase 2 (316 aa).

The L-tyrosine site is built by Y26, Y146, Q150, D153, and Q168. The 'KMSKS' region signature appears at 219–223 (KMSKS). K222 contributes to the ATP binding site.

Belongs to the class-I aminoacyl-tRNA synthetase family. TyrS type 4 subfamily. As to quaternary structure, homodimer.

The protein localises to the cytoplasm. It carries out the reaction tRNA(Tyr) + L-tyrosine + ATP = L-tyrosyl-tRNA(Tyr) + AMP + diphosphate + H(+). Functionally, catalyzes the attachment of tyrosine to tRNA(Tyr) in a two-step reaction: tyrosine is first activated by ATP to form Tyr-AMP and then transferred to the acceptor end of tRNA(Tyr). This chain is Tyrosine--tRNA ligase 2, found in Pyrobaculum aerophilum (strain ATCC 51768 / DSM 7523 / JCM 9630 / CIP 104966 / NBRC 100827 / IM2).